A 248-amino-acid chain; its full sequence is Type II restriction enzyme XhoI (248 aa).

This sequence belongs to the XhoI type II restriction endonuclease family.

The enzyme catalyses Endonucleolytic cleavage of DNA to give specific double-stranded fragments with terminal 5'-phosphates.. Functionally, a P subtype restriction enzyme that recognizes the double-stranded sequence 5'-CTCGAG-3' and cleaves after C-1. This chain is Type II restriction enzyme XhoI, found in Xanthomonas vasicola.